We begin with the raw amino-acid sequence, 224 residues long: PKHD-type hydroxylase Sbal_3634 (224 aa).

In terms of domain architecture, Fe2OG dioxygenase spans 78-176 (QFYPPLFNRY…RTAAFMWLQS (99 aa)). The Fe cation site is built by histidine 96, aspartate 98, and histidine 157. 2-oxoglutarate is bound at residue arginine 167.

The cofactor is Fe(2+). L-ascorbate is required as a cofactor.

The protein is PKHD-type hydroxylase Sbal_3634 of Shewanella baltica (strain OS155 / ATCC BAA-1091).